The sequence spans 161 residues: Large ribosomal subunit protein uL10 (161 aa).

Belongs to the universal ribosomal protein uL10 family. In terms of assembly, part of the ribosomal stalk of the 50S ribosomal subunit. The N-terminus interacts with L11 and the large rRNA to form the base of the stalk. The C-terminus forms an elongated spine to which L12 dimers bind in a sequential fashion forming a multimeric L10(L12)X complex.

Functionally, forms part of the ribosomal stalk, playing a central role in the interaction of the ribosome with GTP-bound translation factors. The protein is Large ribosomal subunit protein uL10 of Sulfurovum sp. (strain NBC37-1).